Here is a 464-residue protein sequence, read N- to C-terminus: Divalent metal cation transporter MntH (464 aa).

11 helical membrane passes run 57–77, 82–102, 125–145, 157–177, 186–206, 229–249, 281–301, 321–341, 376–396, 399–419, and 443–463; these read ILIA…AGGA, SLLS…SMAA, GIIL…AEII, IPLV…LLLM, AIVA…VFLA, MLYL…LYLG, LTIA…LFFG, IVGA…LLSS, LLSV…EAKI, LLTL…VPLV, and VATV…VGVI.

Belongs to the NRAMP family.

The protein localises to the cell membrane. H(+)-stimulated, divalent metal cation uptake system. The protein is Divalent metal cation transporter MntH of Levilactobacillus brevis (Lactobacillus brevis).